Here is a 384-residue protein sequence, read N- to C-terminus: uncharacterized protein (384 aa).

The span at Lys-327 to Lys-339 shows a compositional bias: basic residues. Positions Lys-327–Asp-358 are disordered.

This is an uncharacterized protein from Magallana gigas (Pacific oyster).